A 275-amino-acid polypeptide reads, in one-letter code: Transmembrane protein 45A (275 aa).

The next 5 membrane-spanning stretches (helical) occupy residues His7–Leu27, Ile51–Ile71, Phe100–Val120, Ile150–Glu170, and Ile218–Met238.

It belongs to the TMEM45 family.

Its subcellular location is the membrane. The chain is Transmembrane protein 45A (TMEM45A) from Homo sapiens (Human).